Reading from the N-terminus, the 283-residue chain is ATP synthase gamma chain (283 aa).

It belongs to the ATPase gamma chain family. F-type ATPases have 2 components, CF(1) - the catalytic core - and CF(0) - the membrane proton channel. CF(1) has five subunits: alpha(3), beta(3), gamma(1), delta(1), epsilon(1). CF(0) has three main subunits: a, b and c.

The protein resides in the cell membrane. Produces ATP from ADP in the presence of a proton gradient across the membrane. The gamma chain is believed to be important in regulating ATPase activity and the flow of protons through the CF(0) complex. The sequence is that of ATP synthase gamma chain from Clostridium beijerinckii (strain ATCC 51743 / NCIMB 8052) (Clostridium acetobutylicum).